A 390-amino-acid chain; its full sequence is Outer membrane protein assembly factor BamB (390 aa).

Residues 1–25 form the signal peptide; sequence MPVLRDRIPRRGFFLGLALLAALSG. C26 is lipidated: N-palmitoyl cysteine. A lipid anchor (S-diacylglycerol cysteine) is attached at C26.

Belongs to the BamB family. Part of the Bam complex.

It localises to the cell outer membrane. In terms of biological role, part of the outer membrane protein assembly complex, which is involved in assembly and insertion of beta-barrel proteins into the outer membrane. In Marinobacter adhaerens (strain DSM 23420 / HP15), this protein is Outer membrane protein assembly factor BamB.